The chain runs to 379 residues: MASTLFSRTFLAASHRLITPSLPQKIFNPATFLSRSLHSQLGSASTAYKSTTWARRAMASTGVETKAGYSTSSVSTSEPVVSVDWLHANLREPDLKILDASWYMPDEQRNPIQEYQVAHIPRALFFDLDGISDRKTSLPHMLPTEEAFAAGCSALGIDNKDEVVVYDGKGIFSAARVWWMFRVFGHEKVWVLDGGLPRWRASGYDVESSASGDAILKASAASEAIEKIYQGQTVSPITFQTKFQPHLVWTLDQVKNNMEDPTYQHIDARSKARFDGTAPEPRKGIRSGHIPGSKCIPFPQMFDSCNTLLPAEELKKRFDQEDISLDKPIMASCGTGVTACILAMGLHRLGKTDVPIYDGSWTEWATQPDLPIESVESSS.

Residues 1–56 (MASTLFSRTFLAASHRLITPSLPQKIFNPATFLSRSLHSQLGSASTAYKSTTWARR) constitute a mitochondrion transit peptide. At Ala57 the chain carries N-acetylalanine. 2 Rhodanese domains span residues 91–208 (REPD…DVES) and 259–373 (EDPT…LPIE). The active-site Cysteine persulfide intermediate is the Cys333.

As to expression, expressed in roots, rosette and cauline leaves, stems, flowers and siliques.

The protein resides in the mitochondrion. It catalyses the reaction thiosulfate + hydrogen cyanide = thiocyanate + sulfite + 2 H(+). The enzyme catalyses 2-oxo-3-sulfanylpropanoate + [thioredoxin]-dithiol = [thioredoxin]-disulfide + hydrogen sulfide + pyruvate + H(+). In terms of biological role, catalyzes the transfer of a sulfur ion from a donor to cyanide or to other thiol compounds. Substrate preference is 3-mercaptopyruvate &gt; thiosulfate. Involved in embryo and seed development. The polypeptide is Thiosulfate/3-mercaptopyruvate sulfurtransferase 1, mitochondrial (STR1) (Arabidopsis thaliana (Mouse-ear cress)).